The primary structure comprises 821 residues: Enhancer of polycomb-like protein 1 (821 aa).

Residues 1–12 show a composition bias toward polar residues; sequence MSSNGGSNTNER. Disordered stretches follow at residues 1–43, 427–485, and 779–799; these read MSSN…TRFR, KAAA…QPAM, and QFLQ…PINP. Low complexity-rich tracts occupy residues 18-39 and 449-465; these read SGSL…DSGS and EQAA…SSSQ. A compositionally biased stretch (polar residues) spans 786–799; sequence ENGSPNNATMPINP.

The protein belongs to the enhancer of polycomb family. In terms of assembly, component of the NuA4 histone acetyltransferase complex.

Its subcellular location is the nucleus. Its function is as follows. Component of the NuA4 histone acetyltransferase complex which is involved in transcriptional activation of selected genes principally by acetylation of nucleosomal histone H4 and H2A. The NuA4 complex is also involved in DNA repair. Involved in gene silencing by neighboring heterochromatin, blockage of the silencing spreading along the chromosome, and required for cell cycle progression through G2/M. This chain is Enhancer of polycomb-like protein 1 (EPL1), found in Candida glabrata (strain ATCC 2001 / BCRC 20586 / JCM 3761 / NBRC 0622 / NRRL Y-65 / CBS 138) (Yeast).